The primary structure comprises 162 residues: G/U mismatch-specific DNA glycosylase (162 aa).

This sequence belongs to the uracil-DNA glycosylase (UDG) superfamily. TDG/mug family. As to quaternary structure, binds DNA as a monomer.

It is found in the cytoplasm. It carries out the reaction Specifically hydrolyzes mismatched double-stranded DNA and polynucleotides, releasing free uracil.. Its function is as follows. Excises ethenocytosine and uracil, which can arise by alkylation or deamination of cytosine, respectively, from the corresponding mispairs with guanine in ds-DNA. It is capable of hydrolyzing the carbon-nitrogen bond between the sugar-phosphate backbone of the DNA and the mispaired base. The complementary strand guanine functions in substrate recognition. Required for DNA damage lesion repair in stationary-phase cells. This is G/U mismatch-specific DNA glycosylase from Serratia proteamaculans (strain 568).